Here is a 148-residue protein sequence, read N- to C-terminus: Putative nickel-responsive regulator (148 aa).

4 residues coordinate Ni(2+): His-88, His-99, His-101, and Cys-107.

It belongs to the transcriptional regulatory CopG/NikR family. Requires Ni(2+) as cofactor.

Its function is as follows. Transcriptional regulator. This Helicobacter acinonychis (strain Sheeba) protein is Putative nickel-responsive regulator.